We begin with the raw amino-acid sequence, 782 residues long: Anoctamin-9 (782 aa).

Over 1–198 the chain is Cytoplasmic; it reads MQGEESLRIL…LYFVWLGWYT (198 aa). A helical membrane pass occupies residues 199–219; sequence YMLVPAALTGLLVFLSGFSLF. The Extracellular portion of the chain corresponds to 220–264; that stretch reads EASQISKEICEAHDILMCPLGDHSRRYQRLSETCTFAKLTHLFDN. Ser250 carries the post-translational modification Phosphoserine; by PKA. Residues 265 to 285 form a helical membrane-spanning segment; it reads DGTVVFAIFMALWATVFLEIW. Residues 286–331 are Cytoplasmic-facing; that stretch reads KRQRARVVLHWDLYVWDEEQEEMALQLINCPDYKLRPYQHSYLRST. The chain crosses the membrane as a helical span at residues 332–352; the sequence is VILVLTLLMICLMIGMAHVLV. The Extracellular segment spans residues 353 to 373; the sequence is VYRVLASALFSSSAVPFLEEQ. A helical membrane pass occupies residues 374 to 394; it reads VTTAVVVTGALVHYVTIIIMT. At 395–423 the chain is on the cytoplasmic side; sequence KINRCVALKLCDFEMPRTFSERESRFTIR. The helical transmembrane segment at 424–444 threads the bilayer; it reads FFTLQFFTHFSSLIYIAFILG. Over 445–552 the chain is Extracellular; the sequence is RINGHPGKST…EMMIQYGFTT (108 aa). A helical membrane pass occupies residues 553–573; it reads IFVAAFPLAPLLALFSNLVEI. The Cytoplasmic segment spans residues 574-604; sequence RLDAIKMVWLQRRLVPRKAKDIGTWLQVLET. A helical transmembrane segment spans residues 605–625; sequence IGVLAVIANGMVIAFTSEFIP. At 626–703 the chain is on the extracellular side; the sequence is RVVYKYRYSP…QFWFLLAIRL (78 aa). N-linked (GlcNAc...) asparagine glycosylation is found at Asn641, Asn652, Asn674, and Asn690. A helical membrane pass occupies residues 704 to 724; the sequence is AFVILFEHVALCIKLIAAWFV. At 725–782 the chain is on the cytoplasmic side; it reads PDIPQSVKNKVLEVKYQRLREKMWHGRQRLGGVGAGSRPPMPAHPTPASIFSARSTDV. The interval 756 to 782 is disordered; that stretch reads GVGAGSRPPMPAHPTPASIFSARSTDV.

The protein belongs to the anoctamin family. Post-translationally, phosphorylated on serine residues by cAMP-dependent protein kinase A (PKA) which is essential for activation of its cation channel activity. As to expression, expressed in the kidney. Expressed in the olfactory epithelium.

It is found in the cell membrane. Its subcellular location is the endoplasmic reticulum. The enzyme catalyses a 1,2-diacyl-sn-glycero-3-phospho-L-serine(in) = a 1,2-diacyl-sn-glycero-3-phospho-L-serine(out). It catalyses the reaction a beta-D-galactosyl-(1&lt;-&gt;1')-N-acylsphing-4-enine(out) = a beta-D-galactosyl-(1&lt;-&gt;1')-N-acylsphing-4-enine(in). The catalysed reaction is a 1,2-diacyl-sn-glycero-3-phosphocholine(in) = a 1,2-diacyl-sn-glycero-3-phosphocholine(out). It carries out the reaction Ca(2+)(in) = Ca(2+)(out). The enzyme catalyses Na(+)(in) = Na(+)(out). It catalyses the reaction K(+)(in) = K(+)(out). With respect to regulation, cation channel activity is activated via phosphorylation on serine residues by cAMP-dependent protein kinase A (PKA). Its function is as follows. PKA-activated nonselective cation channel. Discriminates poorly among cations but is more permeable to Ca(2+) ions than to monovalent cations. Acts as a calcium-activated calcium permeable channel which may operate as a endoplasmic reticulum (ER) Ca(2+)-leak channel, reducing the loading of the ER Ca(2+) store. Regulates intracellular Ca2+ signals, ion channel activity, and cytokine release in the renal tissue. Plays an important role in olfaction, amplifying cAMP-evoked cyclic nucleotide-gated (CNG) channel currents in the olfactory sensory neurons. Has calcium-dependent phospholipid scramblase activity; scrambles phosphatidylserine, phosphatidylcholine and galactosylceramide. Does not exhibit calcium-activated chloride channel (CaCC) activity. Can inhibit the activity of ANO1. The sequence is that of Anoctamin-9 (ANO9) from Homo sapiens (Human).